A 311-amino-acid chain; its full sequence is Porphobilinogen deaminase (311 aa).

Cys-242 is subject to S-(dipyrrolylmethanemethyl)cysteine.

It belongs to the HMBS family. As to quaternary structure, monomer. It depends on dipyrromethane as a cofactor.

It carries out the reaction 4 porphobilinogen + H2O = hydroxymethylbilane + 4 NH4(+). The protein operates within porphyrin-containing compound metabolism; protoporphyrin-IX biosynthesis; coproporphyrinogen-III from 5-aminolevulinate: step 2/4. Tetrapolymerization of the monopyrrole PBG into the hydroxymethylbilane pre-uroporphyrinogen in several discrete steps. This is Porphobilinogen deaminase from Hahella chejuensis (strain KCTC 2396).